A 246-amino-acid polypeptide reads, in one-letter code: tRNA pseudouridine synthase A (246 aa).

D53 serves as the catalytic Nucleophile. Y112 serves as a coordination point for substrate.

It belongs to the tRNA pseudouridine synthase TruA family. As to quaternary structure, homodimer.

The enzyme catalyses uridine(38/39/40) in tRNA = pseudouridine(38/39/40) in tRNA. In terms of biological role, formation of pseudouridine at positions 38, 39 and 40 in the anticodon stem and loop of transfer RNAs. In Anaplasma phagocytophilum (strain HZ), this protein is tRNA pseudouridine synthase A.